A 588-amino-acid chain; its full sequence is Proteasome-associated ATPase (588 aa).

The span at 1 to 10 (MAAHDDDMNR) shows a compositional bias: basic and acidic residues. Positions 1–23 (MAAHDDDMNRGIRPGRGSDDPSG) are disordered. A coiled-coil region spans residues 47 to 94 (RILEERIVELQTNLAGVSAQNERLANTLREARDQIVALKEEVDRLAQP). ATP is bound at residue 276 to 281 (GCGKTL). The segment at 587 to 588 (YL) is docks into pockets in the proteasome alpha-ring.

It belongs to the AAA ATPase family. As to quaternary structure, homohexamer. Assembles into a hexameric ring structure that caps the 20S proteasome core. Strongly interacts with the prokaryotic ubiquitin-like protein Pup through a hydrophobic interface; the interacting region of ARC lies in its N-terminal coiled-coil domain. There is one Pup binding site per ARC hexamer ring. Upon ATP-binding, the C-terminus of ARC interacts with the alpha-rings of the proteasome core, possibly by binding to the intersubunit pockets.

Its pathway is protein degradation; proteasomal Pup-dependent pathway. Functionally, ATPase which is responsible for recognizing, binding, unfolding and translocation of pupylated proteins into the bacterial 20S proteasome core particle. May be essential for opening the gate of the 20S proteasome via an interaction with its C-terminus, thereby allowing substrate entry and access to the site of proteolysis. Thus, the C-termini of the proteasomal ATPase may function like a 'key in a lock' to induce gate opening and therefore regulate proteolysis. This chain is Proteasome-associated ATPase, found in Streptomyces scabiei (strain 87.22).